A 371-amino-acid polypeptide reads, in one-letter code: MELAEDWLVESLRLYQDFHAFDLSGATRVLEWIGEKGVFVAGYESLKKNEILHLILPLRLSVQENQGLHPERDFKVRHGGFSDRSVFDLKHVPDTRLLVTSGLPGCYIQMWQVREDNDVIEAVSTIDVQDKEESLWPRVSVFCSKAPGILHGARLSGLRTVDVESQKITYSSGTADSESLSCLQVLDANTFAFCGNSGRLGLVDTRQKWAALETVSPGSGCSGERWCAEVRNKGQGPGPCIASLGSDGQLCLLDSRNLCHPVSSAQCPVFKPSPDPELLRVTWAPGLDNCLAISGFDGTVQIYDVTSWDGKKTQAEPLFTHKGHIFLDGNDVDSAPLVTTHTWHPRKPRTLLSAASDSSLHVWDWVDLQAS.

3 WD repeats span residues 81 to 121 (FSDR…DVIE), 273 to 313 (SPDP…GKKT), and 333 to 371 (DSAP…LQAS).

It belongs to the WD repeat WDR73 family. As to quaternary structure, interacts with INTS9 and INTS11; the interaction is direct. Part of the multiprotein complex composed of BRAT1, WDR73, as well as integrator complex subunits INTS9 and INTS11.

The protein localises to the cytoplasm. The protein resides in the cytoskeleton. It localises to the spindle. Its subcellular location is the spindle pole. It is found in the cleavage furrow. Component of a multiprotein complex required for the assembly of the RNA endonuclease module of the integrator complex. Associates with INTS9 and INTS11 in the cytoplasm, stabilizing the INTS9-INTS11 heterodimer and blocking the active site of INTS11. BRAT1 then joins the complex and plugs the active site of INTS11, leading to WDR73 release and nuclear import of INTS9 and INTS11. The polypeptide is Integrator complex assembly factor WDR73 (Wdr73) (Mus musculus (Mouse)).